The primary structure comprises 253 residues: Imidazole glycerol phosphate synthase subunit HisF (253 aa).

Catalysis depends on residues Asp11 and Asp130.

This sequence belongs to the HisA/HisF family. In terms of assembly, heterodimer of HisH and HisF.

It is found in the cytoplasm. It catalyses the reaction 5-[(5-phospho-1-deoxy-D-ribulos-1-ylimino)methylamino]-1-(5-phospho-beta-D-ribosyl)imidazole-4-carboxamide + L-glutamine = D-erythro-1-(imidazol-4-yl)glycerol 3-phosphate + 5-amino-1-(5-phospho-beta-D-ribosyl)imidazole-4-carboxamide + L-glutamate + H(+). It participates in amino-acid biosynthesis; L-histidine biosynthesis; L-histidine from 5-phospho-alpha-D-ribose 1-diphosphate: step 5/9. IGPS catalyzes the conversion of PRFAR and glutamine to IGP, AICAR and glutamate. The HisF subunit catalyzes the cyclization activity that produces IGP and AICAR from PRFAR using the ammonia provided by the HisH subunit. The sequence is that of Imidazole glycerol phosphate synthase subunit HisF from Clostridium beijerinckii (strain ATCC 51743 / NCIMB 8052) (Clostridium acetobutylicum).